Here is a 190-residue protein sequence, read N- to C-terminus: Glucose-6-phosphate isomerase (190 aa).

Residues histidine 89, histidine 91, glutamate 98, and histidine 137 each contribute to the Fe cation site.

This sequence belongs to the archaeal-type GPI family. Homodimer. Requires Fe cation as cofactor.

The protein resides in the cytoplasm. The enzyme catalyses alpha-D-glucose 6-phosphate = beta-D-fructose 6-phosphate. It participates in carbohydrate degradation; glycolysis; D-glyceraldehyde 3-phosphate and glycerone phosphate from D-glucose: step 2/4. With respect to regulation, inhibited by mannose 6-phosphate, fructose 1-phosphate and fructose 1,6-bisphosphate. Its activity is also inhibited by Cobalt (II) ions &lt; EDTA &lt; nickel (II) ions &lt; zinc (II) ions &lt;&lt; cadmium (II) ions &lt; copper (II) ions. Sodium and potassium ions and manganese ions show little or no effect on activity. The chain is Glucose-6-phosphate isomerase (pgiA) from Thermococcus litoralis.